The sequence spans 338 residues: Nicotinate-nucleotide--dimethylbenzimidazole phosphoribosyltransferase (338 aa).

Glutamate 305 functions as the Proton acceptor in the catalytic mechanism.

This sequence belongs to the CobT family.

It carries out the reaction 5,6-dimethylbenzimidazole + nicotinate beta-D-ribonucleotide = alpha-ribazole 5'-phosphate + nicotinate + H(+). Its pathway is nucleoside biosynthesis; alpha-ribazole biosynthesis; alpha-ribazole from 5,6-dimethylbenzimidazole: step 1/2. Its function is as follows. Catalyzes the synthesis of alpha-ribazole-5'-phosphate from nicotinate mononucleotide (NAMN) and 5,6-dimethylbenzimidazole (DMB). The polypeptide is Nicotinate-nucleotide--dimethylbenzimidazole phosphoribosyltransferase (Rhizobium etli (strain CIAT 652)).